Here is a 429-residue protein sequence, read N- to C-terminus: MSVNIVVIGMQWGDEGKGKIVDFLATHADYVVRYQGGHNAGHTLVVDNKKIVLHVLPSGILHNNIISIIANGVVLEPQSFINEIKLLEAENLCIRKRIFISESCNLIFPYHVFMDLAREKQKYRNFIGTTGCGIGPAYEDKVARRGLCVGDLLDLSFFSRKLEENVNFYNHQFTNFYHTEKVSFKEIFSNLLKVSDVIISMINDIPDLLNNAINDNKSIIFEGAQGTLLDIDHGIYPYVTSSSSVSGSVCSGAGVGIKNLGDIYGVVKAYSTRVGNGPFPTELFGELDAYFCRFGNEFGATTGRRRRTGWLDIVLLRRVISINSITKICLTKLDILDNLEKILICTSYHLKGVKNKKWDSVPFCRNDWDKIKPVYETFLGWKQNTRGITEFDELPKLAKKYIHRIEELIKVPVYIISTGPDRQDIIIRN.

GTP is bound by residues 13-19 (GDEGKGK) and 41-43 (GHT). Residue Asp-14 is the Proton acceptor of the active site. Residues Asp-14 and Gly-41 each coordinate Mg(2+). Residues 14 to 17 (DEGK), 39 to 42 (NAGH), Thr-130, Arg-144, Gln-225, Thr-240, and Arg-304 contribute to the IMP site. The Proton donor role is filled by His-42. 300-306 (ATTGRRR) contacts substrate. Residues Arg-306, 332–334 (KLD), and 417–419 (STG) contribute to the GTP site.

The protein belongs to the adenylosuccinate synthetase family. Homodimer. Mg(2+) serves as cofactor.

The protein localises to the cytoplasm. The enzyme catalyses IMP + L-aspartate + GTP = N(6)-(1,2-dicarboxyethyl)-AMP + GDP + phosphate + 2 H(+). It functions in the pathway purine metabolism; AMP biosynthesis via de novo pathway; AMP from IMP: step 1/2. In terms of biological role, plays an important role in the de novo pathway of purine nucleotide biosynthesis. Catalyzes the first committed step in the biosynthesis of AMP from IMP. The protein is Adenylosuccinate synthetase of Buchnera aphidicola subsp. Baizongia pistaciae (strain Bp).